The chain runs to 147 residues: Phospholipase A2 inhibitor subunit B (147 aa).

The region spanning 62–143 is the C-type lectin domain; it reads EICEEAGGHI…DEKLLVVCEF (82 aa). Intrachain disulfides connect C64-C141 and C119-C133. A glycan (N-linked (GlcNAc...) asparagine) is linked at N103.

The protein belongs to the alpha-type phospholipase A2 inhibitor family. In terms of assembly, homo- or heterotrimer; homotrimer of PLI-A chains, two PLI-A and one PLI-B chains, one PLI-A and two PLI-B chains, and homotrimer of PLI-B chains (with a ratio of 1:3:3:1). In terms of tissue distribution, expressed by the liver.

The protein localises to the secreted. Its function is as follows. PLI binds directly phospholipase A2 in the presence or absence of calcium. Inhibitory activity of the PLI-B homotrimer is less specific than that of the PLI-A homotrimer. The protein is Phospholipase A2 inhibitor subunit B of Protobothrops flavoviridis (Habu).